A 159-amino-acid chain; its full sequence is Phosphopantetheine adenylyltransferase (159 aa).

S9 lines the substrate pocket. Residues 9-10 and H17 contribute to the ATP site; that span reads SF. 3 residues coordinate substrate: K41, L73, and K87. Residues 88 to 90, E98, and 122 to 128 contribute to the ATP site; these read GLR and YSFLSSS.

This sequence belongs to the bacterial CoaD family. In terms of assembly, homohexamer. The cofactor is Mg(2+).

The protein resides in the cytoplasm. The enzyme catalyses (R)-4'-phosphopantetheine + ATP + H(+) = 3'-dephospho-CoA + diphosphate. Its pathway is cofactor biosynthesis; coenzyme A biosynthesis; CoA from (R)-pantothenate: step 4/5. Reversibly transfers an adenylyl group from ATP to 4'-phosphopantetheine, yielding dephospho-CoA (dPCoA) and pyrophosphate. The sequence is that of Phosphopantetheine adenylyltransferase from Streptomyces avermitilis (strain ATCC 31267 / DSM 46492 / JCM 5070 / NBRC 14893 / NCIMB 12804 / NRRL 8165 / MA-4680).